The following is a 194-amino-acid chain: Myelin-associated neurite-outgrowth inhibitor (194 aa).

At Met1 the chain carries N-acetylmethionine. At 1 to 18 (MNPVYSPGSSGVPYANAK) the chain is on the cytoplasmic side. Ser6 is subject to Phosphoserine. The helical transmembrane segment at 19–41 (GIGYPAGFPVGYAAAPAYSPNMY) threads the bilayer. Over 42–141 (PGANPTFQTG…PAPIPPPRGS (100 aa)) the chain is Extracellular. An N-linked (GlcNAc...) asparagine glycan is attached at Asn45. The helical transmembrane segment at 142–163 (GVTMGMVAGTTMAMSAGTLLTA) threads the bilayer. The Cytoplasmic portion of the chain corresponds to 164–194 (HSPTPVAPHPVTVPTYRAPGTPTYSYVPPQW).

It belongs to the FAM168 family. As to quaternary structure, may form homodimers. May interact with DAZAP2, FAM168A, PRDX6, RBM6, TMTC1 and YPEL2. Interacts with CDC27. N-glycosylated. In terms of tissue distribution, predominantly expressed in the brain, including olfactory bulb, cortex and cerebellum (at protein level).

It localises to the cytoplasm. It is found in the perinuclear region. Its subcellular location is the cell membrane. The protein localises to the cell projection. The protein resides in the axon. Functionally, inhibitor of neuronal axonal outgrowth. Acts as a negative regulator of CDC42 and STAT3 and a positive regulator of STMN2. Positive regulator of CDC27. This Mus musculus (Mouse) protein is Myelin-associated neurite-outgrowth inhibitor (Fam168b).